The primary structure comprises 349 residues: Adenine deaminase (349 aa).

Residues His24, His26, and His204 each contribute to the Zn(2+) site. Glu207 (proton donor) is an active-site residue. Zn(2+) is bound at residue Asp285. Asp286 provides a ligand contact to substrate.

This sequence belongs to the metallo-dependent hydrolases superfamily. Adenosine and AMP deaminases family. Adenine deaminase type 2 subfamily. Zn(2+) is required as a cofactor.

It catalyses the reaction adenine + H2O + H(+) = hypoxanthine + NH4(+). Functionally, catalyzes the hydrolytic deamination of adenine to hypoxanthine. Plays an important role in the purine salvage pathway and in nitrogen catabolism. This chain is Adenine deaminase, found in Trichlorobacter lovleyi (strain ATCC BAA-1151 / DSM 17278 / SZ) (Geobacter lovleyi).